The sequence spans 197 residues: 3-isopropylmalate dehydratase small subunit (197 aa).

This sequence belongs to the LeuD family. LeuD type 1 subfamily. In terms of assembly, heterodimer of LeuC and LeuD.

The catalysed reaction is (2R,3S)-3-isopropylmalate = (2S)-2-isopropylmalate. The protein operates within amino-acid biosynthesis; L-leucine biosynthesis; L-leucine from 3-methyl-2-oxobutanoate: step 2/4. Functionally, catalyzes the isomerization between 2-isopropylmalate and 3-isopropylmalate, via the formation of 2-isopropylmaleate. The polypeptide is 3-isopropylmalate dehydratase small subunit (Streptococcus suis (strain 98HAH33)).